The chain runs to 172 residues: MATDFTKYIASVPDYPEKGIMFRDISPLMADGQAFHAATDEIVAYAKDKDVEMVVGPEARGFIVGCPVAYEMGIGFAPARKEGKLPRETVKASYDLEYGQSALYLHKDAIKPGQKVLVTDDLLATGGTIGATIQLVEDLGGIVVGTAFLIELQDLHGRDKLKGYDIFSLMQY.

The protein belongs to the purine/pyrimidine phosphoribosyltransferase family. Homodimer.

It is found in the cytoplasm. It catalyses the reaction AMP + diphosphate = 5-phospho-alpha-D-ribose 1-diphosphate + adenine. Its pathway is purine metabolism; AMP biosynthesis via salvage pathway; AMP from adenine: step 1/1. In terms of biological role, catalyzes a salvage reaction resulting in the formation of AMP, that is energically less costly than de novo synthesis. This Levilactobacillus brevis (strain ATCC 367 / BCRC 12310 / CIP 105137 / JCM 1170 / LMG 11437 / NCIMB 947 / NCTC 947) (Lactobacillus brevis) protein is Adenine phosphoribosyltransferase.